Reading from the N-terminus, the 201-residue chain is Two-component response regulator ORR10 (201 aa).

The 133-residue stretch at 10–142 (HVLAVDDSLP…DMSKLKPHIL (133 aa)) folds into the Response regulatory domain. D75 carries the post-translational modification 4-aspartylphosphate. Residues 149–201 (HYQQEQHLQSNSESNNSSNPTSENSSSSTSTNSHKRKAVDEEILPHTIRPRHS) form a disordered region. Low complexity predominate over residues 158-180 (SNSESNNSSNPTSENSSSSTSTN).

Belongs to the ARR family. Type-A subfamily. Two-component system major event consists of a His-to-Asp phosphorelay between a sensor histidine kinase (HK) and a response regulator (RR). In plants, the His-to-Asp phosphorelay involves an additional intermediate named Histidine-containing phosphotransfer protein (HPt). This multistep phosphorelay consists of a His-Asp-His-Asp sequential transfer of a phosphate group between first a His and an Asp of the HK protein, followed by the transfer to a conserved His of the HPt protein and finally the transfer to an Asp in the receiver domain of the RR protein. As to expression, expressed in mature leaves, and at low levels in roots, shoots and flowers.

Functionally, functions as a response regulator involved in His-to-Asp phosphorelay signal transduction system. Phosphorylation of the Asp residue in the receiver domain activates the ability of the protein to promote the transcription of target genes. Type-A response regulators seem to act as negative regulators of the cytokinin signaling. The chain is Two-component response regulator ORR10 from Oryza sativa subsp. indica (Rice).